Consider the following 800-residue polypeptide: Blood-group-substance endo-1,4-beta-galactosidase (800 aa).

The first 35 residues, 1 to 35 (MGGVTMKNNLKKYIKYILSVILVFFVGVNGMEVYA), serve as a signal peptide directing secretion.

It belongs to the glycosyl hydrolase 98 family.

It is found in the secreted. It carries out the reaction Endohydrolysis of (1-&gt;4)-beta-D-galactosidic linkages in blood group A and B substances.. Endo-beta-galactosidase capable of releasing both the blood group A trisaccharide (A-Tri; GalNAcalpha1--&gt;3(Fucalpha1--&gt;2)Gal) and B trisaccharide (B-Tri; Galalpha1--&gt;3(Fucalpha1--&gt;2)Gal) glycotopes from blood group A- and B-containing glycoconjugates, respectively. In Clostridium perfringens, this protein is Blood-group-substance endo-1,4-beta-galactosidase (eabC).